A 355-amino-acid polypeptide reads, in one-letter code: GTPase Obg (355 aa).

Positions 1 to 159 (MKLVDEAEIL…RLLKLELKLL (159 aa)) constitute an Obg domain. One can recognise an OBG-type G domain in the interval 160–342 (ADVGLLGFPN…IMKDVMAFFD (183 aa)). Residues 166–173 (GFPNAGKS), 191–195 (FTTLY), 213–216 (DVPG), 292–295 (NKAD), and 323–325 (SAL) each bind GTP. Residues Ser173 and Thr193 each coordinate Mg(2+).

The protein belongs to the TRAFAC class OBG-HflX-like GTPase superfamily. OBG GTPase family. Monomer. The cofactor is Mg(2+).

It is found in the cytoplasm. Functionally, an essential GTPase which binds GTP, GDP and possibly (p)ppGpp with moderate affinity, with high nucleotide exchange rates and a fairly low GTP hydrolysis rate. Plays a role in control of the cell cycle, stress response, ribosome biogenesis and in those bacteria that undergo differentiation, in morphogenesis control. This is GTPase Obg from Xanthomonas euvesicatoria pv. vesicatoria (strain 85-10) (Xanthomonas campestris pv. vesicatoria).